Reading from the N-terminus, the 455-residue chain is Golgi pH regulator (455 aa).

Transmembrane regions (helical) follow at residues 5-25 (IDSSIMITSQILFFGFGWLFF), 46-66 (VTFAFSCTMFELIIFEILGVL), 79-99 (LCVILLILVFMVPFYIGYFIV), 114-134 (CLLWLTFMYFFWKLGDPFPIL), and 150-170 (VGVIGVTLMALLSGFGAVNCP). Asparagine 180 carries N-linked (GlcNAc...) asparagine glycosylation. Transmembrane regions (helical) follow at residues 288–308 (FLGYFFSIYCVWKIFMATINI), 343–363 (ISFILVGIIIVTSIRGLLITL), 378–398 (VIVLLLAQIMGMYFVSSVLLI), and 425–445 (WFDVIFLVSALSSILFLYLAH).

It belongs to the Golgi pH regulator (TC 1.A.38) family. Homotrimer. Interacts with RABL3; the interaction stabilizes GPR89.

The protein resides in the golgi apparatus membrane. It catalyses the reaction iodide(out) = iodide(in). The enzyme catalyses chloride(in) = chloride(out). It carries out the reaction bromide(in) = bromide(out). The catalysed reaction is fluoride(in) = fluoride(out). Voltage-gated channel that enables the transfer of monoatomic anions such as iodide, chloride, bromide and fluoride which may function in counter-ion conductance and participates in Golgi acidification. Plays a role in lymphocyte development, probably by acting as a RABL3 effector in hematopoietic cells. The protein is Golgi pH regulator of Mus musculus (Mouse).